A 517-amino-acid polypeptide reads, in one-letter code: GMP synthase [glutamine-hydrolyzing] (517 aa).

A Glutamine amidotransferase type-1 domain is found at 9-199; sequence RILILDFGSQ…VLGICGCERL (191 aa). Catalysis depends on Cys-86, which acts as the Nucleophile. Active-site residues include His-173 and Glu-175. The GMPS ATP-PPase domain maps to 200 to 392; the sequence is WTSESIIEDA…LGLPYEMLYR (193 aa). 227-233 is an ATP binding site; the sequence is SGGVDSS.

In terms of assembly, homodimer.

The enzyme catalyses XMP + L-glutamine + ATP + H2O = GMP + L-glutamate + AMP + diphosphate + 2 H(+). Its pathway is purine metabolism; GMP biosynthesis; GMP from XMP (L-Gln route): step 1/1. Its function is as follows. Catalyzes the synthesis of GMP from XMP. The protein is GMP synthase [glutamine-hydrolyzing] of Vibrio vulnificus (strain CMCP6).